The sequence spans 449 residues: Probable phosphoglucosamine mutase (449 aa).

S96 serves as the catalytic Phosphoserine intermediate. Mg(2+)-binding residues include S96, D233, D235, and D237. S96 carries the post-translational modification Phosphoserine.

The protein belongs to the phosphohexose mutase family. The cofactor is Mg(2+). Activated by phosphorylation.

The enzyme catalyses alpha-D-glucosamine 1-phosphate = D-glucosamine 6-phosphate. Catalyzes the conversion of glucosamine-6-phosphate to glucosamine-1-phosphate. The protein is Probable phosphoglucosamine mutase of Thermococcus gammatolerans (strain DSM 15229 / JCM 11827 / EJ3).